Consider the following 317-residue polypeptide: SWI/SNF-related matrix-associated actin-dependent regulator of chromatin subfamily E member 1-related (317 aa).

A compositionally biased stretch (low complexity) spans methionine 1 to glycine 17. The tract at residues methionine 1–lysine 71 is disordered. Lysine 31 is covalently cross-linked (Glycyl lysine isopeptide (Lys-Gly) (interchain with G-Cter in SUMO2)). Residues lysine 31–lysine 52 are compositionally biased toward basic and acidic residues. The span at lysine 53 to isoleucine 65 shows a compositional bias: basic residues. Positions proline 70–glutamine 138 form a DNA-binding region, HMG box. Serine 160 carries the post-translational modification Phosphoserine. The stretch at glutamate 190–glutamine 257 forms a coiled coil.

Component of a BHC histone deacetylase complex that contains HDAC1, HDAC2, HMG20B/BRAF35, KDM1A, RCOR1/CoREST and PHF21A/BHC80. The BHC complex may also contain ZMYM2, ZNF217, ZMYM3, GSE1 and GTF2I. Interacts with the BRCA2 tumor suppressor protein. Interacts with DTNB. In terms of tissue distribution, ubiquitously expressed in adult tissues.

Its subcellular location is the nucleus. It is found in the chromosome. Required for correct progression through G2 phase of the cell cycle and entry into mitosis. Required for RCOR1/CoREST mediated repression of neuronal specific gene promoters. The sequence is that of SWI/SNF-related matrix-associated actin-dependent regulator of chromatin subfamily E member 1-related (HMG20B) from Homo sapiens (Human).